Consider the following 1179-residue polypeptide: ATP-dependent helicase/deoxyribonuclease subunit B (1179 aa).

This sequence belongs to the helicase family. AddB/RexB type 2 subfamily. As to quaternary structure, heterodimer of AddA and RexB. Mg(2+) is required as a cofactor.

Functionally, the heterodimer acts as both an ATP-dependent DNA helicase and an ATP-dependent, dual-direction single-stranded exonuclease. Recognizes the chi site generating a DNA molecule suitable for the initiation of homologous recombination. This subunit has 5' -&gt; 3' nuclease activity but not helicase activity. The polypeptide is ATP-dependent helicase/deoxyribonuclease subunit B (Lactobacillus delbrueckii subsp. bulgaricus (strain ATCC 11842 / DSM 20081 / BCRC 10696 / JCM 1002 / NBRC 13953 / NCIMB 11778 / NCTC 12712 / WDCM 00102 / Lb 14)).